The following is a 603-amino-acid chain: Phosphomethylpyrimidine synthase (603 aa).

Residues asparagine 224, methionine 253, tyrosine 282, histidine 318, 338 to 340 (SRG), 379 to 382 (DGLR), and glutamate 418 each bind substrate. Position 422 (histidine 422) interacts with Zn(2+). Tyrosine 445 is a substrate binding site. Zn(2+) is bound at residue histidine 486. [4Fe-4S] cluster contacts are provided by cysteine 566, cysteine 569, and cysteine 574.

This sequence belongs to the ThiC family. In terms of assembly, homodimer. [4Fe-4S] cluster serves as cofactor.

It catalyses the reaction 5-amino-1-(5-phospho-beta-D-ribosyl)imidazole + S-adenosyl-L-methionine = 4-amino-2-methyl-5-(phosphooxymethyl)pyrimidine + CO + 5'-deoxyadenosine + formate + L-methionine + 3 H(+). It participates in cofactor biosynthesis; thiamine diphosphate biosynthesis. Functionally, catalyzes the synthesis of the hydroxymethylpyrimidine phosphate (HMP-P) moiety of thiamine from aminoimidazole ribotide (AIR) in a radical S-adenosyl-L-methionine (SAM)-dependent reaction. The protein is Phosphomethylpyrimidine synthase of Xylella fastidiosa (strain Temecula1 / ATCC 700964).